The following is a 628-amino-acid chain: tRNA uridine 5-carboxymethylaminomethyl modification enzyme MnmG (628 aa).

13–18 (GAGHAG) serves as a coordination point for FAD. 273 to 287 (GPRYCPSIEDKIVRF) contributes to the NAD(+) binding site.

Belongs to the MnmG family. As to quaternary structure, homodimer. Heterotetramer of two MnmE and two MnmG subunits. FAD serves as cofactor.

It localises to the cytoplasm. Its function is as follows. NAD-binding protein involved in the addition of a carboxymethylaminomethyl (cmnm) group at the wobble position (U34) of certain tRNAs, forming tRNA-cmnm(5)s(2)U34. The chain is tRNA uridine 5-carboxymethylaminomethyl modification enzyme MnmG from Buchnera aphidicola subsp. Acyrthosiphon pisum (strain 5A).